Here is a 115-residue protein sequence, read N- to C-terminus: Large ribosomal subunit protein bL19 (115 aa).

The protein belongs to the bacterial ribosomal protein bL19 family.

This protein is located at the 30S-50S ribosomal subunit interface and may play a role in the structure and function of the aminoacyl-tRNA binding site. In Francisella tularensis subsp. tularensis (strain WY96-3418), this protein is Large ribosomal subunit protein bL19.